An 894-amino-acid chain; its full sequence is Probable cytoplasmic aconitate hydratase (894 aa).

Substrate-binding positions include Q87 and 207–209 (DSH). Residues C438, C504, and C507 each coordinate [4Fe-4S] cluster. Substrate contacts are provided by residues R537, R542, and 781–782 (SR).

The protein belongs to the aconitase/IPM isomerase family. [4Fe-4S] cluster serves as cofactor.

The protein resides in the cytoplasm. The protein localises to the cytosol. The enzyme catalyses citrate = D-threo-isocitrate. Functionally, catalyzes the isomerization of citrate to isocitrate via cis-aconitate. The sequence is that of Probable cytoplasmic aconitate hydratase (aco1) from Dictyostelium discoideum (Social amoeba).